Reading from the N-terminus, the 561-residue chain is Putative transport protein YbjL (561 aa).

5 helical membrane-spanning segments follow: residues Leu-8–Gly-28, Leu-32–Gln-52, Phe-66–Phe-86, Met-94–Phe-114, and Asn-158–Ala-178. 2 RCK C-terminal domains span residues Leu-202 to Asn-288 and Val-292 to Phe-373. 5 helical membrane-spanning segments follow: residues Leu-383–Phe-403, Phe-406–Met-426, Val-451–Ile-471, Met-475–Ala-495, and Ala-540–Leu-560.

It belongs to the AAE transporter (TC 2.A.81) family. YbjL subfamily.

The protein resides in the cell membrane. The sequence is that of Putative transport protein YbjL from Escherichia fergusonii (strain ATCC 35469 / DSM 13698 / CCUG 18766 / IAM 14443 / JCM 21226 / LMG 7866 / NBRC 102419 / NCTC 12128 / CDC 0568-73).